Reading from the N-terminus, the 721-residue chain is Centlein (721 aa).

A coiled-coil region spans residues K52–N164. Disordered regions lie at residues R156–M180 and E259–V288. Composition is skewed to basic and acidic residues over residues P165–S178 and I267–A284. 2 coiled-coil regions span residues L345–K515 and Q573–S626. Position 658 is a phosphothreonine (T658).

As to quaternary structure, interacts with CEP250 and CEP68. Interacts with NEK2; the interaction leads to phosphorylation of CNTLN. In terms of processing, phosphorylated directly or indirectly by NEK2.

It is found in the cytoplasm. Its subcellular location is the cytoskeleton. The protein resides in the microtubule organizing center. It localises to the centrosome. The protein localises to the centriole. Functionally, required for centrosome cohesion and recruitment of CEP68 to centrosomes. This Rattus norvegicus (Rat) protein is Centlein.